Reading from the N-terminus, the 402-residue chain is mRNA-capping enzyme subunit alpha (402 aa).

The active-site N6-GMP-lysine intermediate is Lys-67. The tract at residues 374–402 (SVTKRKLDETSNDDAPAIKKVAKESEKEI) is disordered.

Belongs to the eukaryotic GTase family. Heterodimer. The mRNA-capping enzyme is composed of two separate chains alpha and beta, respectively a mRNA guanylyltransferase and an mRNA 5'-triphosphate monophosphatase.

It localises to the nucleus. It catalyses the reaction a 5'-end diphospho-ribonucleoside in mRNA + GTP + H(+) = a 5'-end (5'-triphosphoguanosine)-ribonucleoside in mRNA + diphosphate. Functionally, second step of mRNA capping. Transfer of the GMP moiety of GTP to the 5'-end of RNA via an enzyme-GMP covalent reaction intermediate. The polypeptide is mRNA-capping enzyme subunit alpha (ceg1) (Schizosaccharomyces pombe (strain 972 / ATCC 24843) (Fission yeast)).